A 510-amino-acid chain; its full sequence is NAD(P)H-quinone oxidoreductase subunit 2 B, chloroplastic (510 aa).

A run of 13 helical transmembrane segments spans residues leucine 24–leucine 44, isoleucine 57–phenylalanine 77, isoleucine 99–isoleucine 119, methionine 124–cysteine 144, leucine 149–tyrosine 169, tyrosine 183–glycine 203, proline 227–alanine 247, tryptophan 295–isoleucine 315, methionine 323–aspartate 343, tyrosine 354–leucine 374, alanine 395–phenylalanine 415, leucine 418–leucine 438, and methionine 484–isoleucine 504.

The protein belongs to the complex I subunit 2 family. In terms of assembly, NDH is composed of at least 16 different subunits, 5 of which are encoded in the nucleus.

The protein resides in the plastid. It localises to the chloroplast thylakoid membrane. It carries out the reaction a plastoquinone + NADH + (n+1) H(+)(in) = a plastoquinol + NAD(+) + n H(+)(out). It catalyses the reaction a plastoquinone + NADPH + (n+1) H(+)(in) = a plastoquinol + NADP(+) + n H(+)(out). Functionally, NDH shuttles electrons from NAD(P)H:plastoquinone, via FMN and iron-sulfur (Fe-S) centers, to quinones in the photosynthetic chain and possibly in a chloroplast respiratory chain. The immediate electron acceptor for the enzyme in this species is believed to be plastoquinone. Couples the redox reaction to proton translocation, and thus conserves the redox energy in a proton gradient. The polypeptide is NAD(P)H-quinone oxidoreductase subunit 2 B, chloroplastic (Gossypium hirsutum (Upland cotton)).